The sequence spans 690 residues: Elongation factor G (690 aa).

A tr-type G domain is found at 8–283 (EDYRNFGIMA…AVVDYLPSPL (276 aa)). Residues 17-24 (AHIDAGKT), 81-85 (DTPGH), and 135-138 (NKMD) contribute to the GTP site.

Belongs to the TRAFAC class translation factor GTPase superfamily. Classic translation factor GTPase family. EF-G/EF-2 subfamily.

It localises to the cytoplasm. Functionally, catalyzes the GTP-dependent ribosomal translocation step during translation elongation. During this step, the ribosome changes from the pre-translocational (PRE) to the post-translocational (POST) state as the newly formed A-site-bound peptidyl-tRNA and P-site-bound deacylated tRNA move to the P and E sites, respectively. Catalyzes the coordinated movement of the two tRNA molecules, the mRNA and conformational changes in the ribosome. The protein is Elongation factor G of Bradyrhizobium sp. (strain BTAi1 / ATCC BAA-1182).